The sequence spans 802 residues: Copper-exporting P-type ATPase (802 aa).

HMA domains lie at 5–70 (KKTT…YGVA) and 72–138 (ETVE…YDAS). Cu(+) is bound by residues Cys-16, Cys-19, Cys-83, and Cys-86. 6 consecutive transmembrane segments (helical) span residues 161 to 181 (LIIS…HLFN), 192 to 212 (WFQF…FYVG), 224 to 244 (MDVL…YEMV), 256 to 276 (LYFE…YLEA), 411 to 431 (YFVP…ITLV), and 438 to 458 (PALV…LGLA). Residue Asp-495 is the 4-aspartylphosphate intermediate of the active site. Residues Asp-690 and Asp-694 each contribute to the Mg(2+) site. Transmembrane regions (helical) follow at residues 748–767 (LFWA…LGLL) and 771–790 (VAGA…ALRL).

It belongs to the cation transport ATPase (P-type) (TC 3.A.3) family. Type IB subfamily.

The protein resides in the cell membrane. The enzyme catalyses Cu(+)(in) + ATP + H2O = Cu(+)(out) + ADP + phosphate + H(+). Functionally, involved in copper export. This Staphylococcus aureus (strain COL) protein is Copper-exporting P-type ATPase (copA).